We begin with the raw amino-acid sequence, 65 residues long: Large ribosomal subunit protein bL35 (65 aa).

It belongs to the bacterial ribosomal protein bL35 family.

The polypeptide is Large ribosomal subunit protein bL35 (Ruminiclostridium cellulolyticum (strain ATCC 35319 / DSM 5812 / JCM 6584 / H10) (Clostridium cellulolyticum)).